Reading from the N-terminus, the 198-residue chain is Recombination protein RecR (198 aa).

Residues 57–72 (CSICGNLTDDDPCHIC) form a C4-type zinc finger. The Toprim domain maps to 80 to 175 (TTILVVEDAK…KVTRLARGLA (96 aa)).

Belongs to the RecR family.

May play a role in DNA repair. It seems to be involved in an RecBC-independent recombinational process of DNA repair. It may act with RecF and RecO. This Streptococcus pyogenes serotype M1 protein is Recombination protein RecR.